The chain runs to 490 residues: ATP synthase subunit beta, plastid (490 aa).

170–177 provides a ligand contact to ATP; the sequence is GGAGVGKT.

It belongs to the ATPase alpha/beta chains family. F-type ATPases have 2 components, CF(1) - the catalytic core - and CF(0) - the membrane proton channel. CF(1) has five subunits: alpha(3), beta(3), gamma(1), delta(1), epsilon(1). CF(0) has four main subunits: a(1), b(1), b'(1) and c(9-12).

Its subcellular location is the plastid membrane. It carries out the reaction ATP + H2O + 4 H(+)(in) = ADP + phosphate + 5 H(+)(out). Its function is as follows. Produces ATP from ADP in the presence of a proton gradient across the membrane. The catalytic sites are hosted primarily by the beta subunits. This is ATP synthase subunit beta, plastid (atpB) from Cuscuta japonica (Japanese dodder).